Consider the following 770-residue polypeptide: DNA topoisomerase 1 (770 aa).

The Toprim domain maps to 4 to 140; the sequence is FRIIIAEKAD…EIRRAKFSAL (137 aa). Mg(2+)-binding residues include E10 and D109. The region spanning 156–563 is the Topo IA-type catalytic domain; it reads NYSLADAADA…ESKKMLHEVL (408 aa). Residues 194-199 form an interaction with DNA region; sequence SAGRVQ. The active-site O-(5'-phospho-DNA)-tyrosine intermediate is Y312. 3 C4-type zinc fingers span residues 611 to 638, 673 to 700, and 719 to 744; these read CEDP…CPVC, CPAD…YPKC, and CPYC…NMQC.

It belongs to the type IA topoisomerase family. In terms of assembly, monomer. The cofactor is Mg(2+).

It carries out the reaction ATP-independent breakage of single-stranded DNA, followed by passage and rejoining.. Releases the supercoiling and torsional tension of DNA, which is introduced during the DNA replication and transcription, by transiently cleaving and rejoining one strand of the DNA duplex. Introduces a single-strand break via transesterification at a target site in duplex DNA. The scissile phosphodiester is attacked by the catalytic tyrosine of the enzyme, resulting in the formation of a DNA-(5'-phosphotyrosyl)-enzyme intermediate and the expulsion of a 3'-OH DNA strand. The free DNA strand then undergoes passage around the unbroken strand, thus removing DNA supercoils. Finally, in the religation step, the DNA 3'-OH attacks the covalent intermediate to expel the active-site tyrosine and restore the DNA phosphodiester backbone. This Thermoplasma acidophilum (strain ATCC 25905 / DSM 1728 / JCM 9062 / NBRC 15155 / AMRC-C165) protein is DNA topoisomerase 1.